The sequence spans 367 residues: Chorismate synthase (367 aa).

R48 is an NADP(+) binding site. FMN is bound by residues 125–127 (RSS), 243–244 (NA), G283, 298–302 (KPTSS), and R324.

Belongs to the chorismate synthase family. As to quaternary structure, homotetramer. The cofactor is FMNH2.

The enzyme catalyses 5-O-(1-carboxyvinyl)-3-phosphoshikimate = chorismate + phosphate. It functions in the pathway metabolic intermediate biosynthesis; chorismate biosynthesis; chorismate from D-erythrose 4-phosphate and phosphoenolpyruvate: step 7/7. Functionally, catalyzes the anti-1,4-elimination of the C-3 phosphate and the C-6 proR hydrogen from 5-enolpyruvylshikimate-3-phosphate (EPSP) to yield chorismate, which is the branch point compound that serves as the starting substrate for the three terminal pathways of aromatic amino acid biosynthesis. This reaction introduces a second double bond into the aromatic ring system. The polypeptide is Chorismate synthase (Psychrobacter arcticus (strain DSM 17307 / VKM B-2377 / 273-4)).